Reading from the N-terminus, the 822-residue chain is Fibroblast growth factor receptor 1 (822 aa).

An N-terminal signal peptide occupies residues 1–21; the sequence is MWSWKCLLFWAVLVTATLCTA. Residues 22-376 are Extracellular-facing; sequence RPSPTLPEQA…AVMTSPLYLE (355 aa). The 95-residue stretch at 25–119 folds into the Ig-like C2-type 1 domain; sequence PTLPEQAQPW…DTTYFSVNVS (95 aa). C55 and C101 are disulfide-bonded. Residues N77 and N117 are each glycosylated (N-linked (GlcNAc...) asparagine). The disordered stretch occupies residues 120–154; the sequence is DALPSSEDDDDDDDSSSEEKETDNTKPNRMPVAPY. Positions 125-135 are enriched in acidic residues; the sequence is SEDDDDDDDSS. The segment covering 136-145 has biased composition (basic and acidic residues); it reads SEEKETDNTK. 2 consecutive Ig-like C2-type domains span residues 158–246 and 255–357; these read PEKM…YQLD and PILQ…AWLT. The interval 160-177 is heparin-binding; it reads KMEKKLHAVPAAKTVKFK. A disulfide bond links C178 and C230. N-linked (GlcNAc...) asparagine glycans are attached at residues N227, N240, N264, N296, N317, and N330. C277 and C341 are oxidised to a cystine. A helical transmembrane segment spans residues 377-397; that stretch reads IIIYCTGAFLISCMVGSVIVY. The Cytoplasmic segment spans residues 398–822; it reads KMKSGTKKSD…QLANGGLKRR (425 aa). Y463 bears the Phosphotyrosine; by autocatalysis mark. The region spanning 478-767 is the Protein kinase domain; that stretch reads LVLGKPLGEG…VALTSNQEYL (290 aa). ATP contacts are provided by residues 484–490, K514, 562–564, and N568; these read LGEGCFG and EYA. Phosphotyrosine; by autocatalysis occurs at positions 583 and 585. The active-site Proton acceptor is D623. The ATP site is built by R627 and D641. A phosphotyrosine; by autocatalysis mark is found at Y653, Y654, Y730, and Y766. Residues 778–792 show a composition bias toward polar residues; that stretch reads PSFPDTRSSTCSSGE. The tract at residues 778–822 is disordered; that stretch reads PSFPDTRSSTCSSGEDSVFSHEPLPEEPCLPRHPAQLANGGLKRR.

It belongs to the protein kinase superfamily. Tyr protein kinase family. Fibroblast growth factor receptor subfamily. Monomer. Homodimer after ligand binding. Interacts predominantly with FGF1 and FGF2, but can also interact with FGF3, FGF4, FGF5, FGF6, FGF8, FGF10, FGF19, FGF21, FGF22 and FGF23 (in vitro). Ligand specificity is determined by tissue-specific expression of isoforms, and differences in the third Ig-like domain are crucial for ligand specificity. Affinity for fibroblast growth factors (FGFs) is increased by heparan sulfate glycosaminoglycans that function as coreceptors. Likewise, KLB increases the affinity for FGF19, FGF21 and FGF23. Interacts (phosphorylated on Tyr-766) with PLCG1 (via SH2 domains). Interacts with FRS2. Interacts with RPS6KA1. Interacts (via C-terminus) with NEDD4 (via WW3 domain). Interacts with KL. Interacts with SHB (via SH2 domain). Interacts with GRB10. Interacts with ANOS1; this interaction does not interfere with FGF2-binding to FGFR1, but prevents binding of heparin-bound FGF2. Interacts with SOX2 and SOX3. Interacts with FLRT1, FLRT2 and FLRT3. Found in a ternary complex with FGF1 and ITGAV:ITGB3. Autophosphorylated. Binding of FGF family members together with heparan sulfate proteoglycan or heparin promotes receptor dimerization and autophosphorylation on tyrosine residues. Autophosphorylation occurs in trans between the two FGFR molecules present in the dimer and proceeds in a highly ordered manner. Initial autophosphorylation at Tyr-653 increases the kinase activity by a factor of 50 to 100. After this, Tyr-583 becomes phosphorylated, followed by phosphorylation of Tyr-463, Tyr-766, Tyr-583 and Tyr-585. In a third stage, Tyr-654 is autophosphorylated, resulting in a further tenfold increase of kinase activity. Phosphotyrosine residues provide docking sites for interacting proteins and so are crucial for FGFR1 function and its regulation. Post-translationally, ubiquitinated. FGFR1 is rapidly ubiquitinated by NEDD4 after autophosphorylation, leading to internalization and lysosomal degradation. CBL is recruited to activated FGFR1 via FRS2 and GRB2, and mediates ubiquitination and subsequent degradation of FGFR1. In terms of processing, N-glycosylated in the endoplasmic reticulum. The N-glycan chains undergo further maturation to an Endo H-resistant form in the Golgi apparatus. Detected in astrocytoma, neuroblastoma and adrenal cortex cell lines. Some isoforms are detected in foreskin fibroblast cell lines, however isoform 17, isoform 18 and isoform 19 are not detected in these cells.

It is found in the cell membrane. It localises to the nucleus. The protein localises to the cytoplasm. The protein resides in the cytosol. Its subcellular location is the cytoplasmic vesicle. The enzyme catalyses L-tyrosyl-[protein] + ATP = O-phospho-L-tyrosyl-[protein] + ADP + H(+). Present in an inactive conformation in the absence of bound ligand. Ligand binding leads to dimerization and activation by sequential autophosphorylation on tyrosine residues. Inhibited by ARQ 069; this compound maintains the kinase in an inactive conformation and inhibits autophosphorylation. Inhibited by PD173074. Functionally, tyrosine-protein kinase that acts as a cell-surface receptor for fibroblast growth factors and plays an essential role in the regulation of embryonic development, cell proliferation, differentiation and migration. Required for normal mesoderm patterning and correct axial organization during embryonic development, normal skeletogenesis and normal development of the gonadotropin-releasing hormone (GnRH) neuronal system. Phosphorylates PLCG1, FRS2, GAB1 and SHB. Ligand binding leads to the activation of several signaling cascades. Activation of PLCG1 leads to the production of the cellular signaling molecules diacylglycerol and inositol 1,4,5-trisphosphate. Phosphorylation of FRS2 triggers recruitment of GRB2, GAB1, PIK3R1 and SOS1, and mediates activation of RAS, MAPK1/ERK2, MAPK3/ERK1 and the MAP kinase signaling pathway, as well as of the AKT1 signaling pathway. Promotes phosphorylation of SHC1, STAT1 and PTPN11/SHP2. In the nucleus, enhances RPS6KA1 and CREB1 activity and contributes to the regulation of transcription. FGFR1 signaling is down-regulated by IL17RD/SEF, and by FGFR1 ubiquitination, internalization and degradation. This is Fibroblast growth factor receptor 1 (FGFR1) from Homo sapiens (Human).